Here is a 111-residue protein sequence, read N- to C-terminus: Notch-regulated ankyrin repeat-containing protein B (111 aa).

ANK repeat units follow at residues 47–76 and 80–109; these read EGQT…DTRL and DGWS…YSSS.

It belongs to the NRARP family.

Regulates independently canonical Wnt and Notch signaling by modulating LEF1 and Notch protein turnover. Stabilizes LEF1, a pivotal transcription factor in the Wnt signaling cascade, by blocking its ubiquitination. Involved in angiogenesis; involved in intersegmental vessel patterning during development. The protein is Notch-regulated ankyrin repeat-containing protein B (nrarpb) of Danio rerio (Zebrafish).